Reading from the N-terminus, the 134-residue chain is Cilia- and flagella-associated protein 144 (134 aa).

The segment at Q76–D95 is disordered.

The protein belongs to the CFAP144 family. As to quaternary structure, microtubule inner protein component of sperm flagellar doublet microtubules.

The protein localises to the cytoplasm. Its subcellular location is the cytoskeleton. The protein resides in the cilium axoneme. It is found in the flagellum axoneme. Microtubule inner protein (MIP) part of the dynein-decorated doublet microtubules (DMTs) in cilia axoneme, which is required for motile cilia beating. The polypeptide is Cilia- and flagella-associated protein 144 (Homo sapiens (Human)).